Reading from the N-terminus, the 193-residue chain is ECF RNA polymerase sigma factor SigK (193 aa).

The sigma-70 factor domain-2 stretch occupies residues leucine 35–glutamate 101. A Polymerase core binding motif is present at residues glutamate 59 to glutamine 62. The segment at methionine 140–lysine 187 is sigma-70 factor domain-4. The segment at residues tyrosine 161–arginine 180 is a DNA-binding region (H-T-H motif).

This sequence belongs to the sigma-70 factor family. ECF subfamily. In terms of assembly, interacts transiently with the RNA polymerase catalytic core formed by RpoA, RpoB, RpoC and RpoZ (2 alpha, 1 beta, 1 beta' and 1 omega subunit) to form the RNA polymerase holoenzyme that can initiate transcription. Interacts (via sigma-70 factor domain 4) with anti-sigma-K factor RskA.

Sigma factors are initiation factors that promote the attachment of RNA polymerase to specific initiation sites and are then released. Extracytoplasmic function (ECF) sigma factors are held in an inactive form by an anti-sigma factor until released by regulated intramembrane proteolysis. This chain is ECF RNA polymerase sigma factor SigK (sigK), found in Mycobacterium sp. (strain JLS).